We begin with the raw amino-acid sequence, 649 residues long: Phosphomethylpyrimidine synthase (649 aa).

Substrate contacts are provided by residues Asn-235, Met-264, Tyr-293, His-329, 349–351, 390–393, and Glu-429; these read SRG and DGLR. Residue His-433 participates in Zn(2+) binding. Tyr-456 is a substrate binding site. His-497 is a Zn(2+) binding site. [4Fe-4S] cluster-binding residues include Cys-577, Cys-580, and Cys-585. Residues 620–649 are disordered; it reads GMRQKSQEFRDTGSELYHPAVGAKEAQLEE. The segment covering 621–632 has biased composition (basic and acidic residues); the sequence is MRQKSQEFRDTG.

The protein belongs to the ThiC family. In terms of assembly, homodimer. It depends on [4Fe-4S] cluster as a cofactor.

It carries out the reaction 5-amino-1-(5-phospho-beta-D-ribosyl)imidazole + S-adenosyl-L-methionine = 4-amino-2-methyl-5-(phosphooxymethyl)pyrimidine + CO + 5'-deoxyadenosine + formate + L-methionine + 3 H(+). It functions in the pathway cofactor biosynthesis; thiamine diphosphate biosynthesis. Catalyzes the synthesis of the hydroxymethylpyrimidine phosphate (HMP-P) moiety of thiamine from aminoimidazole ribotide (AIR) in a radical S-adenosyl-L-methionine (SAM)-dependent reaction. This chain is Phosphomethylpyrimidine synthase, found in Vibrio atlanticus (strain LGP32) (Vibrio splendidus (strain Mel32)).